The primary structure comprises 340 residues: Dihydroorotate dehydrogenase (quinone) (340 aa).

FMN contacts are provided by residues 61–65 and Thr85; that span reads AGLDK. Residue Lys65 participates in substrate binding. 110-114 serves as a coordination point for substrate; it reads NRMGF. 2 residues coordinate FMN: Asn138 and Asn171. Asn171 is a substrate binding site. The active-site Nucleophile is Ser174. Asn176 lines the substrate pocket. Residues Lys216 and Thr244 each contribute to the FMN site. Residue 245-246 coordinates substrate; it reads NT. FMN contacts are provided by residues Gly267, Gly296, and 317–318; that span reads YS.

This sequence belongs to the dihydroorotate dehydrogenase family. Type 2 subfamily. Monomer. Requires FMN as cofactor.

The protein localises to the cell membrane. The catalysed reaction is (S)-dihydroorotate + a quinone = orotate + a quinol. Its pathway is pyrimidine metabolism; UMP biosynthesis via de novo pathway; orotate from (S)-dihydroorotate (quinone route): step 1/1. Catalyzes the conversion of dihydroorotate to orotate with quinone as electron acceptor. The polypeptide is Dihydroorotate dehydrogenase (quinone) (Ectopseudomonas mendocina (strain ymp) (Pseudomonas mendocina)).